Consider the following 355-residue polypeptide: Inner membrane protein YghQ (355 aa).

The Periplasmic segment spans residues 1–37 (MAGFNIKHWFADGAFRTIIRNSAWLGSSNVVSALLGL). Residues 38–58 (LALSCAGKGMTPAMFGVLVIV) form a helical membrane-spanning segment. The Cytoplasmic segment spans residues 59–100 (QSYAKSISDFIKFQTWQLVVQYGTPALTNNNPQQFRNVVSFS). Residues 101-121 (FSLDIVSGAVAIVGGIALLPF) form a helical membrane-spanning segment. At 122–134 (LSHSLGLDDQSFW) the chain is on the periplasmic side. A helical transmembrane segment spans residues 135–155 (LAALYCTLIPSMASSTPTGIL). Residues 156–177 (RAVDRFDLIAVQQATKPFLRAA) lie on the Cytoplasmic side of the membrane. A helical transmembrane segment spans residues 178-198 (GSVVAWYFDFGFAGFVIAWYV). The Periplasmic segment spans residues 199–261 (SNLVGGTMYW…WSARNSCSTV (63 aa)). A helical transmembrane segment spans residues 262–282 (LVGIVLGPAAAGLFKIAMTFF). The Cytoplasmic segment spans residues 283 to 323 (DAAGTPAGLLGKSFYPEVMRLDPRTTRPWLLGVKSGLLAGG). The helical transmembrane segment at 324–344 (IGILVALAVLIVGKPLISLVF) threads the bilayer. The Periplasmic segment spans residues 345-355 (GVKYLEAYDLI).

The protein resides in the cell inner membrane. This Escherichia coli (strain K12) protein is Inner membrane protein YghQ (yghQ).